The sequence spans 494 residues: ATP synthase subunit beta, plastid (494 aa).

Position 169-176 (169-176 (GGAGVGKT)) interacts with ATP.

It belongs to the ATPase alpha/beta chains family. F-type ATPases have 2 components, CF(1) - the catalytic core - and CF(0) - the membrane proton channel. CF(1) has five subunits: alpha(3), beta(3), gamma(1), delta(1), epsilon(1). CF(0) has four main subunits: a(1), b(1), b'(1) and c(9-12).

It localises to the plastid membrane. It carries out the reaction ATP + H2O + 4 H(+)(in) = ADP + phosphate + 5 H(+)(out). Its function is as follows. Produces ATP from ADP in the presence of a proton gradient across the membrane. The catalytic sites are hosted primarily by the beta subunits. In Cuscuta sandwichiana (Kauna'oa), this protein is ATP synthase subunit beta, plastid (atpB).